The following is a 54-amino-acid chain: Ovomucoid (54 aa).

Residues 4-54 (VDCSDYPRPDCTLEYMPLCGSDNKTYGNKCNFCNAVVDSNGTLTLSHFGKC) enclose the Kazal-like domain. 3 disulfide bridges follow: C6/C36, C14/C33, and C22/C54. A glycan (N-linked (GlcNAc...) asparagine) is linked at N43.

The protein localises to the secreted. This chain is Ovomucoid, found in Dendrocygna eytoni (Plumed whistling-duck).